Reading from the N-terminus, the 328-residue chain is MSLIKIDQKAYEYNLRHIAKKIGSFQRLICVFKDNAYGHGAKLLAPLAKNLGVSFVAVKSEEEAREIEEFFENILILSHRPHGNENSRFIYALNDISQVKNYKQDIKIHLKIDTGMHRNGICVENLEHAINLIQGSDLKLTGMFTHFASADEMDGSFFVQKENFQKAKKIVKKYFSNLLFHSYNSAALFRGKIPEDEYCRVGLVQFGYGDSNLKRVLSLYAHRLSQRILQKGQSIGYGGIFTAAKDMEVATYDLGYADGLFRYNGRGELVLGNGKAMLGKMSMDSFSCENSGEEICVFKDADIWADFFHTINYEILVKLNPNIQRVLV.

Lys33 (proton acceptor; specific for D-alanine) is an active-site residue. The residue at position 33 (Lys33) is an N6-(pyridoxal phosphate)lysine. Residue Arg118 participates in substrate binding. Residue Tyr237 is the Proton acceptor; specific for L-alanine of the active site. Met283 contributes to the substrate binding site.

It belongs to the alanine racemase family. It depends on pyridoxal 5'-phosphate as a cofactor.

The catalysed reaction is L-alanine = D-alanine. The protein operates within amino-acid biosynthesis; D-alanine biosynthesis; D-alanine from L-alanine: step 1/1. Its function is as follows. Catalyzes the interconversion of L-alanine and D-alanine. May also act on other amino acids. The sequence is that of Alanine racemase (alr) from Campylobacter jejuni subsp. jejuni serotype O:2 (strain ATCC 700819 / NCTC 11168).